The following is a 620-amino-acid chain: Palmitoyltransferase ZDHHC17 (620 aa).

At 1–292 (MADALVGYEK…LKMDKEFRQK (292 aa)) the chain is on the cytoplasmic side. ANK repeat units lie at residues 77–106 (ENVTLLHWAAINNRVDLVKYYISKGAIVDQ), 111–140 (LNSTPLHWATRQGHLSMVVQLMKYGADPSL), 144–173 (EGCSCVHLAAQFGHTSIVAYLIAKGQDVDM), 177–207 (NGMTPLMWAAYRTHSVDPTRLLLTFNVSVNL), 212–241 (HKNTALHWAVLAGNTTVISLLLEANANVDA), and 245–274 (KGETPLDLAKQRKNVWMINHLQEARQAKGY). A run of 2 helical transmembrane segments spans residues 293–313 (VMLGTPFLVIWLVGFIADLDI) and 314–334 (DSWLIKGVMYAVMWLVVQFLS). The Cytoplasmic segment spans residues 335 to 345 (KSFFDHSMHSA). A helical transmembrane segment spans residues 346–366 (LPLGIYLATKFWMYITWFYWF). The Lumenal segment spans residues 367–369 (WND). The chain crosses the membrane as a helical span at residues 370–390 (LPFVTIHLPFLLNSLALFYNF). Over 391-469 (GKSWKSDPGI…NCVGSGNHRY (79 aa)) the chain is Cytoplasmic. One can recognise a DHHC domain in the interval 425-475 (IFCSTCLIRKPIRSKHCAVCNRCIAKFDHHCPWVGNCVGSGNHRYFMGYLF). Residue cysteine 455 is the S-palmitoyl cysteine intermediate of the active site. The helical transmembrane segment at 470–490 (FMGYLFFLLCMICWMMYGCIC) threads the bilayer. Residues 491–504 (YWRIHCATSYTKDG) lie on the Lumenal side of the membrane. The helical transmembrane segment at 505-524 (FWIYITQIATCSPWMFWMFL) threads the bilayer. Residues 525 to 620 (NSVFHFMWVA…QTSGSGYQLV (96 aa)) lie on the Cytoplasmic side of the membrane.

This sequence belongs to the DHHC palmitoyltransferase family. AKR/ZDHHC17 subfamily. Post-translationally, autopalmitoylated.

It localises to the golgi apparatus membrane. The protein localises to the cytoplasmic vesicle membrane. It is found in the presynaptic cell membrane. The catalysed reaction is L-cysteinyl-[protein] + hexadecanoyl-CoA = S-hexadecanoyl-L-cysteinyl-[protein] + CoA. It catalyses the reaction L-cysteinyl-[protein] + tetradecanoyl-CoA = S-tetradecanoyl-L-cysteinyl-[protein] + CoA. The enzyme catalyses L-cysteinyl-[protein] + octadecanoyl-CoA = S-octadecanoyl-L-cysteinyl-[protein] + CoA. In terms of biological role, palmitoyltransferase that catalyzes the addition of palmitate onto various protein substrates and is involved in a variety of cellular processes. Has no stringent fatty acid selectivity and in addition to palmitate can also transfer onto target proteins myristate from tetradecanoyl-CoA and stearate from octadecanoyl-CoA. Plays a role in axonogenesis. The protein is Palmitoyltransferase ZDHHC17 of Danio rerio (Zebrafish).